We begin with the raw amino-acid sequence, 949 residues long: Coiled-coil domain-containing protein 80 (949 aa).

Positions 1–27 (MTWKMGPHFTMLLAMWLVCGSASQSSA) are cleaved as a signal peptide. 3 disordered regions span residues 24–79 (QSSA…RRKS), 289–360 (HVVQ…ATRA), and 408–609 (GPSV…SPRK). Residues 295–305 (NNGGGGGGSTG) show a composition bias toward gly residues. The span at 308–328 (SDKRKEDPRRTQIHPTREPPR) shows a compositional bias: basic and acidic residues. Positions 345–360 (RATTLPPAPVTTATRA) are enriched in low complexity. The span at 419 to 429 (PRKEQQREKPQ) shows a compositional bias: basic and acidic residues. Polar residues predominate over residues 436–453 (KATNYGSFTATPPTTLWE). The segment covering 463–477 (RFRDNRTDKREHGHQ) has biased composition (basic and acidic residues). The N-linked (GlcNAc...) asparagine glycan is linked to asparagine 467. The segment covering 487–498 (KPIKGKLPKKKE) has biased composition (basic residues). Basic and acidic residues-rich tracts occupy residues 499–511 (KILS…KYDL), 534–548 (KESK…PEKE), and 556–581 (AKPD…EKEK). Residues lysine 544 and lysine 547 each participate in a glycyl lysine isopeptide (Lys-Gly) (interchain with G-Cter in SUMO2) cross-link. A coiled-coil region spans residues 559 to 587 (DKLLRSEKQMKKAEKKSKQEKEKTKKKKA).

The protein belongs to the CCDC80 family. In terms of assembly, binds to various extracellular matrix proteins. Phosphorylated. Isoform 2 is expressed in uterus, liver, lung, spleen, kidney, heart, bladder, skeletal muscle and brain (at protein level). Isoform 2 is expressed very low in mammary gland and intestine (at protein level). Isoform 2 is expressed in lactating mammary glands and mammary tumors (at protein level). Ubiquitous (isoform 1). Isoform 2 is expressed in ovary, uterus, mammary glands, liver, lung, spleen, kidney, heart, bladder, intestine, skeletal muscle and brain.

The protein localises to the secreted. It is found in the extracellular space. Its subcellular location is the extracellular matrix. Promotes cell adhesion and matrix assembly. The polypeptide is Coiled-coil domain-containing protein 80 (Ccdc80) (Rattus norvegicus (Rat)).